The sequence spans 117 residues: MLMLSTMTLIIFIITIVVMMLATLLSKKTLLDREKCSPFECGFDPMNSSRLPFSLRFFLIAIIFLIFDVEIALLLPMIMIIKTSNLMNWTITSLFFIFILLIGLYHEWNQGALEWNE.

3 helical membrane-spanning segments follow: residues M1–L21, F58–I78, and L86–H106.

It belongs to the complex I subunit 3 family.

The protein resides in the mitochondrion membrane. The catalysed reaction is a ubiquinone + NADH + 5 H(+)(in) = a ubiquinol + NAD(+) + 4 H(+)(out). Core subunit of the mitochondrial membrane respiratory chain NADH dehydrogenase (Complex I) that is believed to belong to the minimal assembly required for catalysis. Complex I functions in the transfer of electrons from NADH to the respiratory chain. The immediate electron acceptor for the enzyme is believed to be ubiquinone. This is NADH-ubiquinone oxidoreductase chain 3 (mt:ND3) from Anopheles gambiae (African malaria mosquito).